The sequence spans 340 residues: Ketol-acid reductoisomerase (NADP(+)) (340 aa).

Residues 3 to 183 (INVYYDKDCD…GGGRTGIIET (181 aa)) form the KARI N-terminal Rossmann domain. NADP(+) is bound by residues 26–29 (FGSQ), Ser54, and 84–87 (DELQ). The active site involves His109. Position 135 (Gly135) interacts with NADP(+). A KARI C-terminal knotted domain is found at 184–329 (TFKDETETDL…KKLRAMMPWI (146 aa)). Mg(2+) contacts are provided by Asp192, Glu196, Glu228, and Glu232. Ser253 is a substrate binding site.

Belongs to the ketol-acid reductoisomerase family. Mg(2+) serves as cofactor.

The catalysed reaction is (2R)-2,3-dihydroxy-3-methylbutanoate + NADP(+) = (2S)-2-acetolactate + NADPH + H(+). It carries out the reaction (2R,3R)-2,3-dihydroxy-3-methylpentanoate + NADP(+) = (S)-2-ethyl-2-hydroxy-3-oxobutanoate + NADPH + H(+). Its pathway is amino-acid biosynthesis; L-isoleucine biosynthesis; L-isoleucine from 2-oxobutanoate: step 2/4. It functions in the pathway amino-acid biosynthesis; L-valine biosynthesis; L-valine from pyruvate: step 2/4. In terms of biological role, involved in the biosynthesis of branched-chain amino acids (BCAA). Catalyzes an alkyl-migration followed by a ketol-acid reduction of (S)-2-acetolactate (S2AL) to yield (R)-2,3-dihydroxy-isovalerate. In the isomerase reaction, S2AL is rearranged via a Mg-dependent methyl migration to produce 3-hydroxy-3-methyl-2-ketobutyrate (HMKB). In the reductase reaction, this 2-ketoacid undergoes a metal-dependent reduction by NADPH to yield (R)-2,3-dihydroxy-isovalerate. The polypeptide is Ketol-acid reductoisomerase (NADP(+)) (Campylobacter concisus (strain 13826)).